The sequence spans 172 residues: uncharacterized protein (172 aa).

Over residues 147–159 (AGSGSGSGSGSGS) the composition is skewed to gly residues. The tract at residues 147 to 172 (AGSGSGSGSGSGSDTGPFKKSQYKIL) is disordered.

This is an uncharacterized protein from Homo sapiens (Human).